The chain runs to 77 residues: Acyl carrier protein (77 aa).

The Carrier domain occupies serine 2–serine 77. The residue at position 37 (serine 37) is an O-(pantetheine 4'-phosphoryl)serine.

The protein belongs to the acyl carrier protein (ACP) family. Post-translationally, 4'-phosphopantetheine is transferred from CoA to a specific serine of apo-ACP by AcpS. This modification is essential for activity because fatty acids are bound in thioester linkage to the sulfhydryl of the prosthetic group.

It localises to the cytoplasm. Its pathway is lipid metabolism; fatty acid biosynthesis. Carrier of the growing fatty acid chain in fatty acid biosynthesis. The chain is Acyl carrier protein from Paramagnetospirillum magneticum (strain ATCC 700264 / AMB-1) (Magnetospirillum magneticum).